A 331-amino-acid chain; its full sequence is Probable leucine carboxyl methyltransferase 1 (331 aa).

S-adenosyl-L-methionine contacts are provided by residues arginine 82, glycine 107, aspartate 131, 179–180, and glutamate 206; that span reads DL.

Belongs to the methyltransferase superfamily. LCMT family.

It catalyses the reaction [phosphatase 2A protein]-C-terminal L-leucine + S-adenosyl-L-methionine = [phosphatase 2A protein]-C-terminal L-leucine methyl ester + S-adenosyl-L-homocysteine. Its function is as follows. Methylates the carboxyl group of the C-terminal leucine residue of protein phosphatase 2A catalytic subunits to form alpha-leucine ester residues. This Caenorhabditis briggsae protein is Probable leucine carboxyl methyltransferase 1.